We begin with the raw amino-acid sequence, 115 residues long: NADH-ubiquinone oxidoreductase chain 3 (115 aa).

A run of 3 helical transmembrane segments spans residues 4 to 24 (FIVM…AFWL), 55 to 75 (FFLV…LLPL), and 86 to 106 (ITML…AYEW).

Belongs to the complex I subunit 3 family. Core subunit of respiratory chain NADH dehydrogenase (Complex I) which is composed of 45 different subunits. Interacts with TMEM186. Interacts with TMEM242.

It is found in the mitochondrion inner membrane. It carries out the reaction a ubiquinone + NADH + 5 H(+)(in) = a ubiquinol + NAD(+) + 4 H(+)(out). In terms of biological role, core subunit of the mitochondrial membrane respiratory chain NADH dehydrogenase (Complex I) which catalyzes electron transfer from NADH through the respiratory chain, using ubiquinone as an electron acceptor. Essential for the catalytic activity of complex I. This Reithrodontomys fulvescens (Fulvous harvest mouse) protein is NADH-ubiquinone oxidoreductase chain 3.